A 117-amino-acid polypeptide reads, in one-letter code: Large ribosomal subunit protein bL20 (117 aa).

Belongs to the bacterial ribosomal protein bL20 family.

Binds directly to 23S ribosomal RNA and is necessary for the in vitro assembly process of the 50S ribosomal subunit. It is not involved in the protein synthesizing functions of that subunit. The chain is Large ribosomal subunit protein bL20 from Vibrio campbellii (strain ATCC BAA-1116).